Consider the following 228-residue polypeptide: Ribosomal RNA small subunit methyltransferase G (228 aa).

S-adenosyl-L-methionine is bound by residues G89, L94, 140–141, and R159; that span reads VE.

This sequence belongs to the methyltransferase superfamily. RNA methyltransferase RsmG family.

The protein localises to the cytoplasm. The enzyme catalyses guanosine(527) in 16S rRNA + S-adenosyl-L-methionine = N(7)-methylguanosine(527) in 16S rRNA + S-adenosyl-L-homocysteine. Its function is as follows. Specifically methylates the N7 position of guanine in position 527 of 16S rRNA. The protein is Ribosomal RNA small subunit methyltransferase G of Burkholderia vietnamiensis (strain G4 / LMG 22486) (Burkholderia cepacia (strain R1808)).